Consider the following 417-residue polypeptide: Brevican core protein (417 aa).

The N-terminal stretch at 1–22 is a signal peptide; it reads MAPLFLPLLIALALAPGPTASA. An Ig-like V-type domain is found at 23–155; sequence DVLEGDSSED…SSDAVEVKVK (133 aa). Intrachain disulfides connect C57-C137, C179-C250, and C203-C224. N130 carries N-linked (GlcNAc...) asparagine glycosylation. Link domains follow at residues 157–252 and 257–354; these read VVFL…YCYA and GELF…YCFR. N267 carries N-linked (GlcNAc...) asparagine glycosylation. Disulfide bonds link C277–C352 and C301–C322. N-linked (GlcNAc...) asparagine glycosylation occurs at N337.

It belongs to the aggrecan/versican proteoglycan family. Central nervous system.

Its subcellular location is the secreted. The protein resides in the extracellular space. The protein localises to the extracellular matrix. Functionally, may play a role in the terminally differentiating and the adult nervous system during postnatal development. Could stabilize interactions between hyaluronan (HA) and brain proteoglycans. The sequence is that of Brevican core protein (BCAN) from Felis catus (Cat).